A 129-amino-acid chain; its full sequence is Small ribosomal subunit protein eS6 (129 aa).

It belongs to the eukaryotic ribosomal protein eS6 family.

The sequence is that of Small ribosomal subunit protein eS6 from Archaeoglobus fulgidus (strain ATCC 49558 / DSM 4304 / JCM 9628 / NBRC 100126 / VC-16).